A 302-amino-acid chain; its full sequence is Lysosomal thioesterase PPT2 (302 aa).

The first 27 residues, 1-27, serve as a signal peptide directing secretion; sequence MPGLWRQRLPSAWALLLLPFLPLLLPA. Asparagine 60 is a glycosylation site (N-linked (GlcNAc...) asparagine). Intrachain disulfides connect cysteine 109-cysteine 117 and cysteine 165-cysteine 176. The Nucleophile role is filled by serine 111. Residues asparagine 190 and asparagine 206 are each glycosylated (N-linked (GlcNAc...) asparagine). Aspartate 228 is an active-site residue. The N-linked (GlcNAc...) asparagine glycan is linked to asparagine 245. Cysteines 276 and 296 form a disulfide. Residue histidine 283 is part of the active site. A glycan (N-linked (GlcNAc...) asparagine) is linked at asparagine 289.

Belongs to the palmitoyl-protein thioesterase family.

It is found in the lysosome. It catalyses the reaction hexadecanoyl-CoA + H2O = hexadecanoate + CoA + H(+). The enzyme catalyses S-hexadecanoyl-N-acetylcysteamine + H2O = N-acetylcysteamine + hexadecanoate + H(+). Functionally, catalyzes the cleavage of thioester bonds from S-palmitoyl-CoA or S-palmitoyl-N-acetylcysteamine (unbranched structures) but does not have activity against palmitoylcysteine or palmitoylated proteins, branched structures or bulky head groups. Conversely, hydrolyzes both long and short chain fatty acyl-CoA substrate. The protein is Lysosomal thioesterase PPT2 (Ppt2) of Rattus norvegicus (Rat).